The primary structure comprises 425 residues: Threonine synthase (425 aa).

Lys105 carries the post-translational modification N6-(pyridoxal phosphate)lysine.

It belongs to the threonine synthase family. It depends on pyridoxal 5'-phosphate as a cofactor.

The catalysed reaction is O-phospho-L-homoserine + H2O = L-threonine + phosphate. The protein operates within amino-acid biosynthesis; L-threonine biosynthesis; L-threonine from L-aspartate: step 5/5. Catalyzes the gamma-elimination of phosphate from L-phosphohomoserine and the beta-addition of water to produce L-threonine. This is Threonine synthase (thrC) from Haemophilus influenzae (strain ATCC 51907 / DSM 11121 / KW20 / Rd).